The following is a 552-amino-acid chain: MSKITLSRKHAPAFSLIALLVSSAAYAENTTEKTDVLLIGGGIMSASLGTVLQEIQPDWKQLMVEKLDGVALESSNGWNNAGTGHSANMELNYTPEREDGSIDVTKALEINEAFMISRQFWSSQVKRGVLNDPHSFINSTPHMSFVWGDKNVEYLTKRYQALQQTTLFQGMQFSTDQQQIKKWAPLIIEGRDPKQKVAATWTPVGTDVNYGEITRQLVGSLKKTSNFKLETSSEVTDFKRNADNSWHVTITDVKSGKEHAVDAKYVFIGAGGGALKLLQKTGIPEADNYAGFPVGGSFLVSENPEIARQHGEKVYGQASVGAPPMSVPHLDARFLDGKRVVLFGPFATFSTKFLKNGSFFDLLSTTTTSNFMPMTDVGLDNFDLVKYLIGQVMLSDEDRFEALKEYYPTARKEDWKLIQAGQRVQIIKKDPEKGGVLKLGTEIVTDQQKTLAALLGASPGASTAAPISINVIKQLFPEQFKSEAWQSKLREIVPSYGQKLNGNVALTQQVWDETAATLQLTKPPVIQMKDAKPATPEAKPAQASSPQHDMAL.

The disordered stretch occupies residues 530-552 (DAKPATPEAKPAQASSPQHDMAL). Residues 542 to 552 (QASSPQHDMAL) show a composition bias toward polar residues.

It belongs to the MQO family. The cofactor is FAD.

It catalyses the reaction (S)-malate + a quinone = a quinol + oxaloacetate. The protein operates within carbohydrate metabolism; tricarboxylic acid cycle; oxaloacetate from (S)-malate (quinone route): step 1/1. This chain is Probable malate:quinone oxidoreductase, found in Cronobacter sakazakii (strain ATCC BAA-894) (Enterobacter sakazakii).